The chain runs to 338 residues: RNA 3'-terminal phosphate cyclase (338 aa).

Residues glutamine 103 and 283-287 each bind ATP; that span reads YLADQ. Histidine 308 functions as the Tele-AMP-histidine intermediate in the catalytic mechanism.

This sequence belongs to the RNA 3'-terminal cyclase family. Type 1 subfamily.

The protein localises to the cytoplasm. The enzyme catalyses a 3'-end 3'-phospho-ribonucleotide-RNA + ATP = a 3'-end 2',3'-cyclophospho-ribonucleotide-RNA + AMP + diphosphate. In terms of biological role, catalyzes the conversion of 3'-phosphate to a 2',3'-cyclic phosphodiester at the end of RNA. The mechanism of action of the enzyme occurs in 3 steps: (A) adenylation of the enzyme by ATP; (B) transfer of adenylate to an RNA-N3'P to produce RNA-N3'PP5'A; (C) and attack of the adjacent 2'-hydroxyl on the 3'-phosphorus in the diester linkage to produce the cyclic end product. The biological role of this enzyme is unknown but it is likely to function in some aspects of cellular RNA processing. This chain is RNA 3'-terminal phosphate cyclase, found in Shigella sonnei (strain Ss046).